Here is a 99-residue protein sequence, read N- to C-terminus: Ferredoxin, heterocyst (99 aa).

The 2Fe-2S ferredoxin-type domain maps to 4-96 (YQVRLINKKE…NCTIKTHQEP (93 aa)). Residues Cys42, Cys47, Cys50, and Cys80 each coordinate [2Fe-2S] cluster.

Belongs to the 2Fe2S plant-type ferredoxin family. Requires [2Fe-2S] cluster as cofactor.

Functionally, ferredoxins are iron-sulfur proteins that transfer electrons in a wide variety of metabolic reactions. This Microchaete diplosiphon (Fremyella diplosiphon) protein is Ferredoxin, heterocyst (fdxH).